The primary structure comprises 265 residues: Small ribosomal subunit protein uS2 (265 aa).

Residues 231–265 (VEEEYEDYEGAEDDYEYDETEYTDSVIPDDEEEAE) form a disordered region.

The protein belongs to the universal ribosomal protein uS2 family.

The polypeptide is Small ribosomal subunit protein uS2 (Trichormus variabilis (strain ATCC 29413 / PCC 7937) (Anabaena variabilis)).